Here is a 189-residue protein sequence, read N- to C-terminus: Interferon alpha-12 (189 aa).

Residues 1-23 (MARLCAFLMTLLVMSYWSTCSLG) form the signal peptide. Disulfide bonds link Cys-24-Cys-122 and Cys-52-Cys-162. Asn-101 carries N-linked (GlcNAc...) asparagine glycosylation.

It belongs to the alpha/beta interferon family.

The protein resides in the secreted. Produced by macrophages, IFN-alpha have antiviral activities. Interferon stimulates the production of two enzymes: a protein kinase and an oligoadenylate synthetase. The sequence is that of Interferon alpha-12 (Ifna12) from Mus musculus (Mouse).